Here is a 520-residue protein sequence, read N- to C-terminus: Keratin, type II cytoskeletal 72 (520 aa).

A head region spans residues 1–133 (MSRQLTLYPG…DPEIQKVRAQ (133 aa)). The tract at residues 134 to 169 (EREQIKALNNKFASFIDKVRFLEQQNQVLETKWELL) is coil 1A. The region spanning 134–447 (EREQIKALNN…KLLESEESRM (314 aa)) is the IF rod domain. Positions 170–188 (QQLDLNNSKRSLEPVHESY) are linker 1. The interval 189-280 (ISNLQKQLEI…VLFEGEIAQM (92 aa)) is coil 1B. Residues 281-304 (QSHISDTSVILSMDNNRQLDLDSI) are linker 12. A coil 2 region spans residues 305–443 (LAEVRAQYEE…ATYRKLLESE (139 aa)). A tail region spans residues 444-520 (ESRMAGEYPN…SSGTTKKTSR (77 aa)). A disordered region spans residues 494-520 (KGSCGSELKDPPAKTSGSSGTTKKTSR). Residues 507-520 (KTSGSSGTTKKTSR) show a composition bias toward low complexity.

The protein belongs to the intermediate filament family. As to quaternary structure, heterotetramer of two type I and two type II keratins.

In terms of biological role, has a role in hair formation. Specific component of keratin intermediate filaments in the inner root sheath (IRS) of the hair follicle. The protein is Keratin, type II cytoskeletal 72 (Krt72) of Mus musculus (Mouse).